The primary structure comprises 1155 residues: Alpha,alpha-trehalose-phosphate synthase [UDP-forming] 1 (1155 aa).

The segment at 56 to 94 (LQRRRSVSSRGGSLRGSMDSLNDSGQNGAEDVIGVEDEE) is disordered. Over residues 63-72 (SSRGGSLRGS) the composition is skewed to low complexity.

It in the N-terminal section; belongs to the glycosyltransferase 20 family. The protein in the C-terminal section; belongs to the gob-1 trehalose phosphatase family.

The enzyme catalyses D-glucose 6-phosphate + UDP-alpha-D-glucose = alpha,alpha-trehalose 6-phosphate + UDP + H(+). Catalyzes the production of trehalose from glucose-6-phosphate and UDP-alpha-D-glucose in a 2 step process. The chain is Alpha,alpha-trehalose-phosphate synthase [UDP-forming] 1 (tps-1) from Aphelenchoides avenae (Mycophagous nematode worm).